A 459-amino-acid polypeptide reads, in one-letter code: Trigger factor (459 aa).

In terms of domain architecture, PPIase FKBP-type spans 166 to 245 (GDFANIDLTA…VNSVKAEELP (80 aa)).

The protein belongs to the FKBP-type PPIase family. Tig subfamily.

Its subcellular location is the cytoplasm. The enzyme catalyses [protein]-peptidylproline (omega=180) = [protein]-peptidylproline (omega=0). Its function is as follows. Involved in protein export. Acts as a chaperone by maintaining the newly synthesized protein in an open conformation. Functions as a peptidyl-prolyl cis-trans isomerase. The polypeptide is Trigger factor (Bifidobacterium longum subsp. infantis (strain ATCC 15697 / DSM 20088 / JCM 1222 / NCTC 11817 / S12)).